Here is a 383-residue protein sequence, read N- to C-terminus: Lipid-A-disaccharide synthase (383 aa).

This sequence belongs to the LpxB family.

The enzyme catalyses a lipid X + a UDP-2-N,3-O-bis[(3R)-3-hydroxyacyl]-alpha-D-glucosamine = a lipid A disaccharide + UDP + H(+). It functions in the pathway bacterial outer membrane biogenesis; LPS lipid A biosynthesis. Its function is as follows. Condensation of UDP-2,3-diacylglucosamine and 2,3-diacylglucosamine-1-phosphate to form lipid A disaccharide, a precursor of lipid A, a phosphorylated glycolipid that anchors the lipopolysaccharide to the outer membrane of the cell. The protein is Lipid-A-disaccharide synthase of Anaeromyxobacter dehalogenans (strain 2CP-1 / ATCC BAA-258).